The chain runs to 557 residues: Dihydroxy-acid dehydratase (557 aa).

Cys49 provides a ligand contact to [2Fe-2S] cluster. A Mg(2+)-binding site is contributed by Asp81. Cys122 is a binding site for [2Fe-2S] cluster. Mg(2+) is bound by residues Asp123 and Lys124. Lys124 is modified (N6-carboxylysine). Cys194 is a binding site for [2Fe-2S] cluster. Glu446 lines the Mg(2+) pocket. Ser472 acts as the Proton acceptor in catalysis.

The protein belongs to the IlvD/Edd family. Homodimer. Requires [2Fe-2S] cluster as cofactor. The cofactor is Mg(2+).

It carries out the reaction (2R)-2,3-dihydroxy-3-methylbutanoate = 3-methyl-2-oxobutanoate + H2O. It catalyses the reaction (2R,3R)-2,3-dihydroxy-3-methylpentanoate = (S)-3-methyl-2-oxopentanoate + H2O. It functions in the pathway amino-acid biosynthesis; L-isoleucine biosynthesis; L-isoleucine from 2-oxobutanoate: step 3/4. The protein operates within amino-acid biosynthesis; L-valine biosynthesis; L-valine from pyruvate: step 3/4. Its function is as follows. Functions in the biosynthesis of branched-chain amino acids. Catalyzes the dehydration of (2R,3R)-2,3-dihydroxy-3-methylpentanoate (2,3-dihydroxy-3-methylvalerate) into 2-oxo-3-methylpentanoate (2-oxo-3-methylvalerate) and of (2R)-2,3-dihydroxy-3-methylbutanoate (2,3-dihydroxyisovalerate) into 2-oxo-3-methylbutanoate (2-oxoisovalerate), the penultimate precursor to L-isoleucine and L-valine, respectively. The protein is Dihydroxy-acid dehydratase of Prochlorococcus marinus (strain MIT 9301).